We begin with the raw amino-acid sequence, 251 residues long: GTP cyclohydrolase FolE2 (251 aa).

Belongs to the GTP cyclohydrolase IV family.

The catalysed reaction is GTP + H2O = 7,8-dihydroneopterin 3'-triphosphate + formate + H(+). It participates in cofactor biosynthesis; 7,8-dihydroneopterin triphosphate biosynthesis; 7,8-dihydroneopterin triphosphate from GTP: step 1/1. Its function is as follows. Converts GTP to 7,8-dihydroneopterin triphosphate. This Desulfotalea psychrophila (strain LSv54 / DSM 12343) protein is GTP cyclohydrolase FolE2.